The primary structure comprises 416 residues: CinA-like protein (416 aa).

This sequence belongs to the CinA family.

The protein is CinA-like protein of Synechocystis sp. (strain ATCC 27184 / PCC 6803 / Kazusa).